The primary structure comprises 347 residues: Phosphoribosylformylglycinamidine cyclo-ligase (347 aa).

This sequence belongs to the AIR synthase family.

It is found in the cytoplasm. It catalyses the reaction 2-formamido-N(1)-(5-O-phospho-beta-D-ribosyl)acetamidine + ATP = 5-amino-1-(5-phospho-beta-D-ribosyl)imidazole + ADP + phosphate + H(+). Its pathway is purine metabolism; IMP biosynthesis via de novo pathway; 5-amino-1-(5-phospho-D-ribosyl)imidazole from N(2)-formyl-N(1)-(5-phospho-D-ribosyl)glycinamide: step 2/2. The sequence is that of Phosphoribosylformylglycinamidine cyclo-ligase from Alkalilimnicola ehrlichii (strain ATCC BAA-1101 / DSM 17681 / MLHE-1).